The chain runs to 155 residues: Protein SprT-like (155 aa).

Residues 7-145 (QRHMEEVSLQ…GSCGGKLIQI (139 aa)) enclose the SprT-like domain. His-67 is a binding site for Zn(2+). Residue Glu-68 is part of the active site. His-71 serves as a coordination point for Zn(2+).

It belongs to the SprT family. Zn(2+) serves as cofactor.

It localises to the cytoplasm. The sequence is that of Protein SprT-like from Listeria monocytogenes serotype 4a (strain HCC23).